The primary structure comprises 499 residues: GTPase Der (499 aa).

EngA-type G domains are found at residues 3-166 (PVVA…LETL) and 213-386 (IKFA…QSAT). GTP-binding positions include 9–16 (GRPNVGKS), 56–60 (DTGGI), 118–121 (NKTD), 219–226 (GRPNVGKS), 266–270 (DTAGV), and 331–334 (NKWD). The 85-residue stretch at 387–471 (RRTSTAMLTR…PIRVEFQESA (85 aa)) folds into the KH-like domain. A disordered region spans residues 476–499 (GRKNTMTLSQERQRKRLLKAKTKK). Positions 488–499 (QRKRLLKAKTKK) are enriched in basic residues.

It belongs to the TRAFAC class TrmE-Era-EngA-EngB-Septin-like GTPase superfamily. EngA (Der) GTPase family. As to quaternary structure, associates with the 50S ribosomal subunit.

Its function is as follows. GTPase that plays an essential role in the late steps of ribosome biogenesis. This is GTPase Der from Aeromonas salmonicida (strain A449).